The chain runs to 108 residues: uncharacterized protein (108 aa).

This is an uncharacterized protein from Acidianus sp. F28 (AFV-2).